Here is a 413-residue protein sequence, read N- to C-terminus: Serine/threonine transporter SstT (413 aa).

Helical transmembrane passes span 14–34, 44–64, 82–102, 141–161, 178–198, 217–237, 290–310, 330–350, and 356–376; these read GSLV…ASFS, LGTL…FILV, IVLL…VVSF, ALAS…GVAL, GVTF…FGLV, LMVL…LIVF, IPLG…VLTL, LVAA…LLLI, and LFGI…IIGV.

Belongs to the dicarboxylate/amino acid:cation symporter (DAACS) (TC 2.A.23) family.

It is found in the cell inner membrane. The catalysed reaction is L-serine(in) + Na(+)(in) = L-serine(out) + Na(+)(out). It catalyses the reaction L-threonine(in) + Na(+)(in) = L-threonine(out) + Na(+)(out). Functionally, involved in the import of serine and threonine into the cell, with the concomitant import of sodium (symport system). The protein is Serine/threonine transporter SstT of Edwardsiella ictaluri (strain 93-146).